A 155-amino-acid chain; its full sequence is Ribosomal RNA large subunit methyltransferase H (155 aa).

S-adenosyl-L-methionine-binding positions include Leu72, Gly103, and 122–127 (LSALTL).

Belongs to the RNA methyltransferase RlmH family. Homodimer.

It localises to the cytoplasm. The catalysed reaction is pseudouridine(1915) in 23S rRNA + S-adenosyl-L-methionine = N(3)-methylpseudouridine(1915) in 23S rRNA + S-adenosyl-L-homocysteine + H(+). Functionally, specifically methylates the pseudouridine at position 1915 (m3Psi1915) in 23S rRNA. This chain is Ribosomal RNA large subunit methyltransferase H, found in Shigella boydii serotype 18 (strain CDC 3083-94 / BS512).